Reading from the N-terminus, the 204-residue chain is Nucleoside triphosphate pyrophosphatase (204 aa).

Catalysis depends on Asp-79, which acts as the Proton acceptor.

This sequence belongs to the Maf family. A divalent metal cation serves as cofactor.

The protein resides in the cytoplasm. The enzyme catalyses a ribonucleoside 5'-triphosphate + H2O = a ribonucleoside 5'-phosphate + diphosphate + H(+). It carries out the reaction a 2'-deoxyribonucleoside 5'-triphosphate + H2O = a 2'-deoxyribonucleoside 5'-phosphate + diphosphate + H(+). Functionally, nucleoside triphosphate pyrophosphatase. May have a dual role in cell division arrest and in preventing the incorporation of modified nucleotides into cellular nucleic acids. The protein is Nucleoside triphosphate pyrophosphatase of Trichodesmium erythraeum (strain IMS101).